The sequence spans 299 residues: Protease HtpX homolog (299 aa).

Transmembrane regions (helical) follow at residues 19–39 (LFIV…VWYF) and 41–61 (WGIT…WIAY). Histidine 146 provides a ligand contact to Zn(2+). Glutamate 147 is an active-site residue. Residue histidine 150 coordinates Zn(2+). The next 2 membrane-spanning stretches (helical) occupy residues 156 to 176 (ILLM…RDVF) and 198 to 218 (IILL…VLII). Residue glutamate 227 coordinates Zn(2+).

The protein belongs to the peptidase M48B family. Requires Zn(2+) as cofactor.

The protein localises to the cell membrane. The chain is Protease HtpX homolog from Caldanaerobacter subterraneus subsp. tengcongensis (strain DSM 15242 / JCM 11007 / NBRC 100824 / MB4) (Thermoanaerobacter tengcongensis).